The following is a 258-amino-acid chain: ATP synthase subunit a (258 aa).

6 helical membrane-spanning segments follow: residues 30–50, 85–105, 122–142, 151–171, 198–218, and 230–250; these read SSYFMVLTTVLTIVLFMVAMS, FFPFVFTLFIFILVANMLGMF, LIVTVALAMLVWLTVIIYGVF, LFVPSGVPIFVLPLVVVIEII, FAGFVVTLAAAWGGFGYLAGI, and LEFLVAFLQAYVFAMLTCIYL.

Belongs to the ATPase A chain family. As to quaternary structure, F-type ATPases have 2 components, CF(1) - the catalytic core - and CF(0) - the membrane proton channel. CF(1) has five subunits: alpha(3), beta(3), gamma(1), delta(1), epsilon(1). CF(0) has three main subunits: a(1), b(2) and c(9-12). The alpha and beta chains form an alternating ring which encloses part of the gamma chain. CF(1) is attached to CF(0) by a central stalk formed by the gamma and epsilon chains, while a peripheral stalk is formed by the delta and b chains.

It is found in the cell inner membrane. Functionally, key component of the proton channel; it plays a direct role in the translocation of protons across the membrane. The chain is ATP synthase subunit a from Maricaulis maris (strain MCS10) (Caulobacter maris).